Consider the following 58-residue polypeptide: UPF0434 protein Swoo_1821 (58 aa).

The protein belongs to the UPF0434 family.

This Shewanella woodyi (strain ATCC 51908 / MS32) protein is UPF0434 protein Swoo_1821.